A 941-amino-acid polypeptide reads, in one-letter code: Cell wall protein IFF9 (941 aa).

An N-terminal signal peptide occupies residues 1 to 20 (MQLFQNILVSIALLTQIVFA). Asparagine 917 is lipidated: GPI-anchor amidated asparagine. Positions 918–941 (GSNKESIENIKYLALVVFGLMMFM) are cleaved as a propeptide — removed in mature form.

This sequence belongs to the HYR1/IFF family. The GPI-anchor is attached to the protein in the endoplasmic reticulum and serves to target the protein to the cell surface. There, the glucosamine-inositol phospholipid moiety is cleaved off and the GPI-modified mannoprotein is covalently attached via its lipidless GPI glycan remnant to the 1,6-beta-glucan of the outer cell wall layer.

Its subcellular location is the secreted. It is found in the cell wall. The protein resides in the membrane. In terms of biological role, GPI-anchored cell wall protein involved in cell wall organization, hyphal growth, as well as in host-fungal interaction and virulence. In Candida albicans (strain SC5314 / ATCC MYA-2876) (Yeast), this protein is Cell wall protein IFF9 (IFF9).